The following is a 122-amino-acid chain: Large ribosomal subunit protein bL12 (122 aa).

It belongs to the bacterial ribosomal protein bL12 family. Homodimer. Part of the ribosomal stalk of the 50S ribosomal subunit. Forms a multimeric L10(L12)X complex, where L10 forms an elongated spine to which 2 to 4 L12 dimers bind in a sequential fashion. Binds GTP-bound translation factors.

Functionally, forms part of the ribosomal stalk which helps the ribosome interact with GTP-bound translation factors. Is thus essential for accurate translation. In Stenotrophomonas maltophilia (strain R551-3), this protein is Large ribosomal subunit protein bL12.